Reading from the N-terminus, the 80-residue chain is uncharacterized protein (80 aa).

A helical transmembrane segment spans residues 12–32 (FKIIALILLIVLIINLSYKLF).

The protein localises to the membrane. This is an uncharacterized protein from Saccharomyces cerevisiae (strain ATCC 204508 / S288c) (Baker's yeast).